The chain runs to 66 residues: Large ribosomal subunit protein bL35 (66 aa).

This sequence belongs to the bacterial ribosomal protein bL35 family.

The protein is Large ribosomal subunit protein bL35 of Moorella thermoacetica (strain ATCC 39073 / JCM 9320).